The chain runs to 105 residues: Large ribosomal subunit protein uL24 (105 aa).

This sequence belongs to the universal ribosomal protein uL24 family. In terms of assembly, part of the 50S ribosomal subunit.

Its function is as follows. One of two assembly initiator proteins, it binds directly to the 5'-end of the 23S rRNA, where it nucleates assembly of the 50S subunit. One of the proteins that surrounds the polypeptide exit tunnel on the outside of the subunit. The protein is Large ribosomal subunit protein uL24 of Vibrio parahaemolyticus serotype O3:K6 (strain RIMD 2210633).